A 71-amino-acid polypeptide reads, in one-letter code: UPF0346 protein SPG_0874 (71 aa).

Belongs to the UPF0346 family.

This chain is UPF0346 protein SPG_0874, found in Streptococcus pneumoniae serotype 19F (strain G54).